A 153-amino-acid polypeptide reads, in one-letter code: MKTFVLHIFIFALVAFASASRDSAKKIGSQYDNYATCLAEHSLTEDDIFSIGEVSSGQHKTNHEDTELHKNGCVMQCLLEKDGLMSGADYDEEKIREDYIKETGAQPGDQRIEALNACMQETKDMEDKCDKSLLLVACVLAAEAVLADSNEGA.

An N-terminal signal peptide occupies residues 1–19 (MKTFVLHIFIFALVAFASA). 3 disulfides stabilise this stretch: Cys37/Cys77, Cys73/Cys129, and Cys118/Cys138.

It belongs to the PBP/GOBP family. In terms of assembly, homodimer.

Its subcellular location is the secreted. Colony queen number, a major feature of social organization, is associated with worker genotype for Gp-9. Colonies are headed by either a single reproductive queen (monogyne form) or multiple queens (polygyne form). Differences in worker Gp-9 genotypes between social forms may cause differences in workers' abilities to recognize queens and regulate their numbers. This Solenopsis sp. (strain B0-153) (Fire ant) protein is Pheromone-binding protein Gp-9.